The chain runs to 800 residues: DNA topoisomerase 1 (800 aa).

The Toprim domain maps to 1–111; that stretch reads MKLVIVESPA…VKSDDFFKRV (111 aa). Mg(2+) is bound by residues Glu-7 and Asp-80. A Topo IA-type catalytic domain is found at 132 to 568; the sequence is DNNLVNAQQA…FWNGFNHNIE (437 aa). The interaction with DNA stretch occupies residues 166-171; sequence SAGRVQ. Tyr-304 functions as the O-(5'-phospho-DNA)-tyrosine intermediate in the catalytic mechanism. Residues 600-627 form a C4-type zinc finger; sequence CPSCKTGELSLKLGKFGAFLACSNYPEC.

Belongs to the type IA topoisomerase family. In terms of assembly, monomer. It depends on Mg(2+) as a cofactor.

The catalysed reaction is ATP-independent breakage of single-stranded DNA, followed by passage and rejoining.. Releases the supercoiling and torsional tension of DNA, which is introduced during the DNA replication and transcription, by transiently cleaving and rejoining one strand of the DNA duplex. Introduces a single-strand break via transesterification at a target site in duplex DNA. The scissile phosphodiester is attacked by the catalytic tyrosine of the enzyme, resulting in the formation of a DNA-(5'-phosphotyrosyl)-enzyme intermediate and the expulsion of a 3'-OH DNA strand. The free DNA strand then undergoes passage around the unbroken strand, thus removing DNA supercoils. Finally, in the religation step, the DNA 3'-OH attacks the covalent intermediate to expel the active-site tyrosine and restore the DNA phosphodiester backbone. This Rickettsia bellii (strain RML369-C) protein is DNA topoisomerase 1.